The primary structure comprises 178 residues: tRNA (cytidine(56)-2'-O)-methyltransferase (178 aa).

Leucine 88 contributes to the S-adenosyl-L-methionine binding site.

The protein belongs to the aTrm56 family. As to quaternary structure, homodimer.

The protein resides in the cytoplasm. It carries out the reaction cytidine(56) in tRNA + S-adenosyl-L-methionine = 2'-O-methylcytidine(56) in tRNA + S-adenosyl-L-homocysteine + H(+). In terms of biological role, specifically catalyzes the AdoMet-dependent 2'-O-ribose methylation of cytidine at position 56 in tRNAs. This Methanopyrus kandleri (strain AV19 / DSM 6324 / JCM 9639 / NBRC 100938) protein is tRNA (cytidine(56)-2'-O)-methyltransferase.